Consider the following 695-residue polypeptide: Polyribonucleotide nucleotidyltransferase (695 aa).

Mg(2+)-binding residues include Asp-486 and Asp-492. One can recognise a KH domain in the interval Pro-553–Ile-612. Residues Gly-622–Lys-690 enclose the S1 motif domain.

The protein belongs to the polyribonucleotide nucleotidyltransferase family. Requires Mg(2+) as cofactor.

Its subcellular location is the cytoplasm. The catalysed reaction is RNA(n+1) + phosphate = RNA(n) + a ribonucleoside 5'-diphosphate. Its function is as follows. Involved in mRNA degradation. Catalyzes the phosphorolysis of single-stranded polyribonucleotides processively in the 3'- to 5'-direction. The sequence is that of Polyribonucleotide nucleotidyltransferase from Chlamydia trachomatis serovar L2 (strain ATCC VR-902B / DSM 19102 / 434/Bu).